Here is a 409-residue protein sequence, read N- to C-terminus: Secreted LysM effector Blys2 (409 aa).

The first 20 residues, 1–20 (MTRFTTTLVAALAGANLAAA), serve as a signal peptide directing secretion. The LysM 1 domain maps to 24–71 (YKWRAHAGDTCDSLSSDWSVQVSDFIKWNPSVGANCSNGVTAGQEYCV). N-linked (GlcNAc...) asparagine glycosylation occurs at Asn58. A disordered region spans residues 74–111 (NGAGSKPTTPPTGSPTTLTTAVTTASSTPTQPTDGAPS). Low complexity predominate over residues 87–106 (SPTTLTTAVTTASSTPTQPT). LysM domains are found at residues 129–176 (AWYK…YVCV), 206–253 (KWYK…FVCV), 283–330 (KFYK…YYCI), and 357–405 (KYYK…YICV).

It belongs to the secreted LysM effector family.

The protein localises to the secreted. Its subcellular location is the cell wall. Its function is as follows. Secreted effector that enables the plant pathogenic fungus to manipulate host defenses for successful infection. Required for the full virulence to infect insect hosts. In contrast to Blys5, Blys2 is not able to protect fungal hyphae against the hydrolytic activity of chitinase but plays an important role in evasion of insect immunities. Binds chitin. Coats and protects the cell walls of insect pathogens from host cell recognition. The sequence is that of Secreted LysM effector Blys2 from Beauveria bassiana (strain ARSEF 2860) (White muscardine disease fungus).